The chain runs to 208 residues: LexA repressor (208 aa).

Residues 30–50 constitute a DNA-binding region (H-T-H motif); that stretch reads VREIGKSVGLSSSSTVAAYLE. Catalysis depends on for autocatalytic cleavage activity residues Ser-129 and Lys-167.

It belongs to the peptidase S24 family. In terms of assembly, homodimer.

It catalyses the reaction Hydrolysis of Ala-|-Gly bond in repressor LexA.. Represses a number of genes involved in the response to DNA damage (SOS response), including recA and lexA. In the presence of single-stranded DNA, RecA interacts with LexA causing an autocatalytic cleavage which disrupts the DNA-binding part of LexA, leading to derepression of the SOS regulon and eventually DNA repair. The chain is LexA repressor from Lacticaseibacillus casei (strain BL23) (Lactobacillus casei).